Consider the following 1400-residue polypeptide: DNA-directed RNA polymerase subunit beta' (1400 aa).

Zn(2+) is bound by residues cysteine 71, cysteine 73, cysteine 86, and cysteine 89. The Mg(2+) site is built by aspartate 462, aspartate 464, and aspartate 466. Zn(2+) is bound by residues cysteine 811, cysteine 885, cysteine 892, and cysteine 895.

Belongs to the RNA polymerase beta' chain family. In terms of assembly, the RNAP catalytic core consists of 2 alpha, 1 beta, 1 beta' and 1 omega subunit. When a sigma factor is associated with the core the holoenzyme is formed, which can initiate transcription. Mg(2+) is required as a cofactor. The cofactor is Zn(2+).

It carries out the reaction RNA(n) + a ribonucleoside 5'-triphosphate = RNA(n+1) + diphosphate. DNA-dependent RNA polymerase catalyzes the transcription of DNA into RNA using the four ribonucleoside triphosphates as substrates. This is DNA-directed RNA polymerase subunit beta' from Brucella abortus (strain S19).